The following is a 101-amino-acid chain: Small ribosomal subunit protein uS14 (101 aa).

It belongs to the universal ribosomal protein uS14 family. In terms of assembly, part of the 30S ribosomal subunit. Contacts proteins S3 and S10.

Its function is as follows. Binds 16S rRNA, required for the assembly of 30S particles and may also be responsible for determining the conformation of the 16S rRNA at the A site. The chain is Small ribosomal subunit protein uS14 from Shewanella loihica (strain ATCC BAA-1088 / PV-4).